Here is a 60-residue protein sequence, read N- to C-terminus: Potassium channel toxin-like Tx677 (60 aa).

A signal peptide spans 1 to 22; that stretch reads MKISALVMITLLICSMMILCQG. Disulfide bonds link Cys30-Cys51, Cys36-Cys56, and Cys40-Cys58.

It belongs to the short scorpion toxin superfamily. Potassium channel inhibitor family. As to expression, expressed by the venom gland.

It localises to the secreted. In terms of biological role, weakly inhibits Kv11.1/KCNH2/ERG1, Kv1.2/KCNA2 and Kv1.3/KCNA3 voltage-gated potassium channels. The chain is Potassium channel toxin-like Tx677 from Buthus israelis (Israeli scorpion).